A 67-amino-acid polypeptide reads, in one-letter code: Large ribosomal subunit protein uL29 (67 aa).

It belongs to the universal ribosomal protein uL29 family.

The protein is Large ribosomal subunit protein uL29 of Gemmatimonas aurantiaca (strain DSM 14586 / JCM 11422 / NBRC 100505 / T-27).